We begin with the raw amino-acid sequence, 383 residues long: S-adenosylmethionine synthase (383 aa).

Position 15 (histidine 15) interacts with ATP. Position 17 (aspartate 17) interacts with Mg(2+). Glutamate 43 is a K(+) binding site. The L-methionine site is built by glutamate 56 and glutamine 99. The interval 99–109 (QSQDINQGVDR) is flexible loop. Residues 164-166 (DAK), 230-231 (RF), aspartate 239, 245-246 (RK), alanine 262, and lysine 266 contribute to the ATP site. Aspartate 239 provides a ligand contact to L-methionine. Residue lysine 270 coordinates L-methionine.

The protein belongs to the AdoMet synthase family. As to quaternary structure, homotetramer; dimer of dimers. The cofactor is Mg(2+). It depends on K(+) as a cofactor.

It localises to the cytoplasm. It carries out the reaction L-methionine + ATP + H2O = S-adenosyl-L-methionine + phosphate + diphosphate. The protein operates within amino-acid biosynthesis; S-adenosyl-L-methionine biosynthesis; S-adenosyl-L-methionine from L-methionine: step 1/1. Catalyzes the formation of S-adenosylmethionine (AdoMet) from methionine and ATP. The overall synthetic reaction is composed of two sequential steps, AdoMet formation and the subsequent tripolyphosphate hydrolysis which occurs prior to release of AdoMet from the enzyme. In Actinobacillus succinogenes (strain ATCC 55618 / DSM 22257 / CCUG 43843 / 130Z), this protein is S-adenosylmethionine synthase.